The chain runs to 530 residues: RNA-binding protein 39 (530 aa).

Residues methionine 1–threonine 146 are disordered. Position 2 is an N-acetylalanine (alanine 2). Positions proline 14–serine 32 are enriched in basic and acidic residues. Basic residues-rich tracts occupy residues lysine 33–lysine 56 and lysine 64–tyrosine 95. The residue at position 95 (tyrosine 95) is a Phosphotyrosine. A phosphoserine mark is found at serine 97 and serine 100. A Glycyl lysine isopeptide (Lys-Gly) (interchain with G-Cter in SUMO2) cross-link involves residue lysine 111. Serine 117 carries the post-translational modification Phosphoserine. Lysine 119 participates in a covalent cross-link: Glycyl lysine isopeptide (Lys-Gly) (interchain with G-Cter in SUMO2). Residues lysine 119–proline 130 are compositionally biased toward basic residues. 2 positions are modified to phosphoserine: serine 121 and serine 136. The span at phenylalanine 131 to threonine 146 shows a compositional bias: basic and acidic residues. At threonine 146 the chain carries Phosphothreonine. Residues arginine 153–alanine 230 enclose the RRM 1 domain. Lysine 244 is covalently cross-linked (Glycyl lysine isopeptide (Lys-Gly) (interchain with G-Cter in SUMO2)). The RRM 2 domain maps to methionine 250–glutamate 328. The segment at lysine 291–glycine 355 is activating domain. The interval lysine 291–glutamine 406 is interaction with JUN. Phosphoserine occurs at positions 334, 337, and 341. The tract at residues glycine 355 to glutamine 406 is interaction with ESR1 and ESR2. The segment at glutamine 406–arginine 530 is interaction with NCOA6. The RRM 3 domain maps to glutamate 445–leucine 508.

Belongs to the splicing factor SR family. In terms of assembly, interacts with NCOA6 and JUN. Interacts with ESR1 and ESR2, in the presence of estradiol (E2). Interacts with RSRC1 (via Arg/Ser-rich domain). Interacts with SF3B1. Interacts with ZNF106 (via N-terminus).

The protein resides in the nucleus. Its function is as follows. RNA-binding protein that acts as a pre-mRNA splicing factor. Acts by promoting exon inclusion via regulation of exon cassette splicing. Also acts as a transcriptional coactivator for steroid nuclear receptors ESR1/ER-alpha and ESR2/ER-beta, and JUN/AP-1, independently of the pre-mRNA splicing factor activity. In Mus musculus (Mouse), this protein is RNA-binding protein 39 (Rbm39).